Consider the following 172-residue polypeptide: MNEKYPIGEFQFDGEITNIIINEWINEIEDLPRLLKNTVIDLNNEQLDTSYRSGGWTVRQVIHHLADSHMNAYIRLKLAITEENPVIKPYDEKEWAELYDYNLPIEISLSLIEALHKRWCSLLRDLSPTDMERTFKHPESGSISIGKNIGIYAWHGKHHLAHITSLCKRKDW.

Zn(2+) is bound by residues H64, H155, and H159.

It belongs to the metal hydrolase YfiT family. In terms of assembly, homodimer. Requires Zn(2+) as cofactor.

The protein resides in the cytoplasm. In terms of biological role, possible metal-dependent hydrolase. The polypeptide is Putative metal-dependent hydrolase OB0782 (Oceanobacillus iheyensis (strain DSM 14371 / CIP 107618 / JCM 11309 / KCTC 3954 / HTE831)).